The sequence spans 436 residues: Probable D-serine dehydratase (436 aa).

N6-(pyridoxal phosphate)lysine is present on lysine 111.

Belongs to the serine/threonine dehydratase family. DsdA subfamily. Pyridoxal 5'-phosphate is required as a cofactor.

It carries out the reaction D-serine = pyruvate + NH4(+). The polypeptide is Probable D-serine dehydratase (Lactiplantibacillus plantarum (strain ATCC BAA-793 / NCIMB 8826 / WCFS1) (Lactobacillus plantarum)).